Consider the following 148-residue polypeptide: Photosystem I reaction center subunit XI (148 aa).

Helical transmembrane passes span 48–68 (LEIG…LGPL), 73–93 (IGLL…TLGL), and 122–142 (GGFF…LSSI).

It belongs to the PsaL family.

It is found in the plastid. Its subcellular location is the chloroplast thylakoid membrane. This chain is Photosystem I reaction center subunit XI, found in Thalassiosira pseudonana (Marine diatom).